The chain runs to 680 residues: DNA-directed RNA polymerase subunit beta' (680 aa).

C69, C71, C87, and C90 together coordinate Zn(2+). D489, D491, and D493 together coordinate Mg(2+).

The protein belongs to the RNA polymerase beta' chain family. RpoC1 subfamily. In plastids the minimal PEP RNA polymerase catalytic core is composed of four subunits: alpha, beta, beta', and beta''. When a (nuclear-encoded) sigma factor is associated with the core the holoenzyme is formed, which can initiate transcription. It depends on Mg(2+) as a cofactor. The cofactor is Zn(2+).

Its subcellular location is the plastid. It is found in the chloroplast. The enzyme catalyses RNA(n) + a ribonucleoside 5'-triphosphate = RNA(n+1) + diphosphate. Its function is as follows. DNA-dependent RNA polymerase catalyzes the transcription of DNA into RNA using the four ribonucleoside triphosphates as substrates. The protein is DNA-directed RNA polymerase subunit beta' of Ranunculus macranthus (Large buttercup).